Reading from the N-terminus, the 483-residue chain is Iron-sulfur cluster assembly SufBD family protein ycf24 (483 aa).

It belongs to the iron-sulfur cluster assembly SufBD family.

The protein localises to the plastid. It is found in the chloroplast. The polypeptide is Iron-sulfur cluster assembly SufBD family protein ycf24 (ycf24) (Guillardia theta (Cryptophyte)).